A 187-amino-acid chain; its full sequence is UPF0301 protein Ppha_2142 (187 aa).

This sequence belongs to the UPF0301 (AlgH) family.

The chain is UPF0301 protein Ppha_2142 from Pelodictyon phaeoclathratiforme (strain DSM 5477 / BU-1).